Reading from the N-terminus, the 205-residue chain is MSKRVQAKHKLDRRMGQNIWGRPKSPVNRREYGPGQHGQRRKGKMSDFGTQLRAKQKLKGYYGNITEKQFRRYYAEAIRLRGDSGENLIGLLERRLDAVVYRSKFVATPFAARQFVNHGHIKVNGRRVNIPSYQVKAGDVIEVKEASRQLEIVVVASQLAERDVPDYIEVDHHKMTARVTRIPGLTEVPYPVQMEPNLVIEFYSR.

Residues 1 to 12 (MSKRVQAKHKLD) are compositionally biased toward basic residues. Residues 1–49 (MSKRVQAKHKLDRRMGQNIWGRPKSPVNRREYGPGQHGQRRKGKMSDFG) are disordered. Positions 94–155 (RRLDAVVYRS…ASRQLEIVVV (62 aa)) constitute an S4 RNA-binding domain.

This sequence belongs to the universal ribosomal protein uS4 family. In terms of assembly, part of the 30S ribosomal subunit. Contacts protein S5. The interaction surface between S4 and S5 is involved in control of translational fidelity.

Its function is as follows. One of the primary rRNA binding proteins, it binds directly to 16S rRNA where it nucleates assembly of the body of the 30S subunit. In terms of biological role, with S5 and S12 plays an important role in translational accuracy. The protein is Small ribosomal subunit protein uS4 of Methylorubrum extorquens (strain CM4 / NCIMB 13688) (Methylobacterium extorquens).